Reading from the N-terminus, the 693-residue chain is MRQVCSFKREFAGKELKIDIGKVAWQATGAALVQYGETTVLVTVVASEDKKEDVDFFPLTVEYVERLYAAGKIPGGFFKREGKPTEPEILFARLIDRPLRPLFAKDFRNEVQVIVTVLSYDHENSTDIPSIIGASCAIILAGLPFKGPIGAVRIGWDGNEWYINPPVTLSNSLLLDLVVAGTKDAVLMIEGDGKEVPEDIFLEGIIKAHSAMLDVINFQEEILSQINPAPFNYDPFVVDERLKRAVLDYVTVDQIRDAIFTPSKSERQKALEDLKKKVIEHFKPIYGEITAQVDEIINQEAKKILSQVVLEEKRRVDGRKLNEIRPVSCEVGVLKRVHGSALFQRGETQVLSVVTLGAGEEQIIESVIESEPKRYIHHYNFPPFSVGEAKPLRGPKRREIGHGALAERALLPLIPKEEEFPYTIRVVSEVLSSNGSTSMASVCGSSLSLMDAGVPIKTHVAGVAMGLIKEGDRFEVLTDIQGLEDALGGMDFKIAGTRNGITAVQLDIKVDGLSYEIIERTLKQAKEARYQILDIMEKTIPQPRPEISPYAPRIMVLEINPSKIGDLIGPSGKNIKKIIEETHTTINIKPEGLVYISAPDQESAEKAAQMVQDYTRDIKEGDIFLGKVIRVTDYGAFVEILPGKIGLLHISKYKTTGTGKNQTREEINLGDEILIKVDSIDSSGRISLTRKDL.

2 residues coordinate Mg(2+): Asp-485 and Asp-491. The region spanning 552–611 (PRIMVLEINPSKIGDLIGPSGKNIKKIIEETHTTINIKPEGLVYISAPDQESAEKAAQMV) is the KH domain. An S1 motif domain is found at 621 to 691 (GDIFLGKVIR…SSGRISLTRK (71 aa)).

This sequence belongs to the polyribonucleotide nucleotidyltransferase family. Requires Mg(2+) as cofactor.

It is found in the cytoplasm. The catalysed reaction is RNA(n+1) + phosphate = RNA(n) + a ribonucleoside 5'-diphosphate. Functionally, involved in mRNA degradation. Catalyzes the phosphorolysis of single-stranded polyribonucleotides processively in the 3'- to 5'-direction. This is Polyribonucleotide nucleotidyltransferase from Dictyoglomus thermophilum (strain ATCC 35947 / DSM 3960 / H-6-12).